Here is a 556-residue protein sequence, read N- to C-terminus: MTAPIWMASPPEVHSALLSSGPGPGPLLVSAEGWHSLSIAYAETADELAALLAAVQAGTWDGPTAAVYVAAHTPYLAWLVQASANSAAMATRQETAATAYGTALAAMPTLAELGANHALHGVLMATNFFGINTIPIALNESDYARMWIQAATTMASYQAVSTAAVAAAPQTTPAPQIVKANAPTAASDEPNQVQEWLQWLQKIGYTDFYNNVIQPFINWLTNLPFLQAMFSGFDPWLPSLGNPLTFLSPANIAFALGYPMDIGSYVAFLSQTFAFIGADLAAAFASGNPATIAFTLMFTTVEAIGTIITDTIALVKTLLEQTLALLPAALPLLAAPLAPLTLAPASAAGGFAGLSGLAGLVGIPPSAPPVIPPVAAIAPSIPTPTPTPAPAPAPTAVTAPTPPLGPPPPPVTAPPPVTGAGIQSFGYLVGDLNSAAQARKAVGTGVRKKTPEPDSAEAPASAAAPEEQVQPQRRRRPKIKQLGRGYEYLDLDPETGHDPTGSPQGAGTLGFAGTTHKASPGQVAGLITLPNDAFGGSPRTPMMPGTWDTDSATRVE.

Positions 8-164 (ASPPEVHSAL…ASYQAVSTAA (157 aa)) are PPE. An SH3-like region spans residues 201–256 (QKIGYTDFYNNVIQPFINWLTNLPFLQAMFSGFDPWLPSLGNPLTFLSPANIAFAL). A leucine zipper motif region spans residues 319–340 (LEQTLALLPAALPLLAAPLAPL). Disordered regions lie at residues 385-418 (TPTP…PPVT) and 443-556 (GTGV…TRVE). The segment covering 400–417 (PTPPLGPPPPPVTAPPPV) has biased composition (pro residues). Residues 456-471 (AEAPASAAAPEEQVQP) are compositionally biased toward low complexity. Positions 472–481 (QRRRRPKIKQ) are enriched in basic residues. Residues 473–481 (RRRRPKIKQ) carry the Nuclear localization signal motif.

This sequence belongs to the mycobacterial PPE family.

The protein resides in the secreted. It is found in the host cytoplasm. It localises to the host nucleus. Inhibits nitric oxide (NO) production in activated macrophages. Acts by inhibiting expression of the host inducible nitric oxide synthase (iNOS). PPE2 is translocated into the host macrophage nucleus, where it interacts with a GATA-binding site overlapping with the TATA box of NOS2 (iNOS) promoter, and strongly inhibits NOS2 gene transcription. Reduction in NO production in turn facilitates intracellular survival of the bacilli inside the macrophage. In addition, disrupts the assembly of NADPH oxidase complex, which inhibits NADPH oxidase-mediated reactive oxygen species (ROS) generation in macrophages and favors M.tuberculosis survival. Acts by interacting with NCF2, the cytosolic subunit of NADPH oxidase, and preventing translocation of NCF2 and NCF1 to the membrane, which causes a reduction of the functional assembly of NADPH oxidase complex and a decrease in NADPH oxidase activity. This Mycobacterium tuberculosis (strain CDC 1551 / Oshkosh) protein is PPE family protein PPE2 (PPE2).